The primary structure comprises 170 residues: Cathelicidin antimicrobial peptide (170 aa).

The signal sequence occupies residues 1 to 30 (MKTQRDGPSLGRWSLVLLLLGLVMPLAIVA). The propeptide at 31–131 (QVLSYQEAVL…DISCDKDNRR (101 aa)) is cathelin-like domain (CLD). Cystine bridges form between cysteine 86-cysteine 97 and cysteine 108-cysteine 125. The interval 150–162 (LKKIGQKIKDFLG) is active core.

This sequence belongs to the cathelicidin family. As to quaternary structure, monomer, homodimer or homotrimer (in vitro). Oligomerizes as tetra- or hexamer in solution (in vitro). In terms of processing, proteolytically cleaved by proteinase PRTN3 into antibacterial peptide LL-37. Proteolytically cleaved by cathepsin CTSG and neutrophil elastase ELANE. Post-translationally, resistant to proteolytic degradation in solution, and when bound to both zwitterionic (mimicking mammalian membranes) and negatively charged membranes (mimicking bacterial membranes). After secretion onto the skin surface, the CAMP gene product is processed by a serine protease-dependent mechanism into multiple novel antimicrobial peptides distinct from and shorter than cathelicidin LL-37. These peptides show enhanced antimicrobial action, acquiring the ability to kill skin pathogens such as S.aureus, E.coli and C.albicans. These peptides have lost the ability to stimulate CXCL8/IL8 release from keratinocytes. The peptides act synergistically, killing bacteria at lower concentrations when present together, and maintain activity at increased salt condition.

The protein resides in the secreted. The protein localises to the vesicle. Functionally, antimicrobial protein that is an integral component of the innate immune system. Binds to bacterial lipopolysaccharides (LPS). Acts via neutrophil N-formyl peptide receptors to enhance the release of CXCL2. Postsecretory processing generates multiple cathelicidin antimicrobial peptides with various lengths which act as a topical antimicrobial defense in sweat on skin. The unprocessed precursor form, cathelicidin antimicrobial peptide, inhibits the growth of Gram-negative E.coli and E.aerogenes with efficiencies comparable to that of the mature peptide LL-37 (in vitro). In terms of biological role, antimicrobial peptide that is an integral component of the innate immune system. Binds to bacterial lipopolysaccharides (LPS). Causes membrane permeabilization by forming transmembrane pores (in vitro). Causes lysis of E.coli. Exhibits antimicrobial activity against Gram-negative bacteria such as P.aeruginosa, S.typhimurium, E.aerogenes, E.coli and P.syringae, Gram-positive bacteria such as L.monocytogenes, S.epidermidis, S.pyogenes and S.aureus, as well as vancomycin-resistant enterococci (in vitro). Exhibits antimicrobial activity against methicillin-resistant S.aureus, P.mirabilis, and C.albicans in low-salt media, but not in media containing 100 mM NaCl (in vitro). Forms chiral supramolecular assemblies with quinolone signal (PQS) molecules of P.aeruginosa, which may lead to interference of bacterial quorum signaling and perturbance of bacterial biofilm formation. May form supramolecular fiber-like assemblies on bacterial membranes. Induces cytokine and chemokine producation as well as TNF/TNFA and CSF2/GMCSF production in normal human keratinocytes. Exhibits hemolytic activity against red blood cells. Its function is as follows. Exhibits antimicrobial activity against E.coli and B.megaterium (in vitro). This chain is Cathelicidin antimicrobial peptide, found in Chlorocebus aethiops (Green monkey).